The primary structure comprises 126 residues: MYPHLVSLGISEPEKIERYSLRQEAHKDILKIYFSKQKGELFAKSVKFKYPRQVKNVLVDSGSHRYKETTEINRNLTLIIDELNKITRPEKETPTDVKKKILKDLRHLEKVVASKIEEIEKDLEKL.

The protein belongs to the UPF0325 family.

The protein is UPF0325 protein VFMJ11_2099 of Aliivibrio fischeri (strain MJ11) (Vibrio fischeri).